Here is a 359-residue protein sequence, read N- to C-terminus: tRNA/tmRNA (uracil-C(5))-methyltransferase (359 aa).

5 residues coordinate S-adenosyl-L-methionine: Gln-183, Tyr-211, Asn-216, Glu-232, and Asp-292. Catalysis depends on Cys-317, which acts as the Nucleophile. Catalysis depends on Glu-351, which acts as the Proton acceptor.

The protein belongs to the class I-like SAM-binding methyltransferase superfamily. RNA M5U methyltransferase family. TrmA subfamily.

It carries out the reaction uridine(54) in tRNA + S-adenosyl-L-methionine = 5-methyluridine(54) in tRNA + S-adenosyl-L-homocysteine + H(+). It catalyses the reaction uridine(341) in tmRNA + S-adenosyl-L-methionine = 5-methyluridine(341) in tmRNA + S-adenosyl-L-homocysteine + H(+). Its function is as follows. Dual-specificity methyltransferase that catalyzes the formation of 5-methyluridine at position 54 (m5U54) in all tRNAs, and that of position 341 (m5U341) in tmRNA (transfer-mRNA). In Pseudomonas fluorescens (strain Pf0-1), this protein is tRNA/tmRNA (uracil-C(5))-methyltransferase.